Here is a 234-residue protein sequence, read N- to C-terminus: Phosphoribosylaminoimidazole-succinocarboxamide synthase (234 aa).

This sequence belongs to the SAICAR synthetase family.

It carries out the reaction 5-amino-1-(5-phospho-D-ribosyl)imidazole-4-carboxylate + L-aspartate + ATP = (2S)-2-[5-amino-1-(5-phospho-beta-D-ribosyl)imidazole-4-carboxamido]succinate + ADP + phosphate + 2 H(+). It functions in the pathway purine metabolism; IMP biosynthesis via de novo pathway; 5-amino-1-(5-phospho-D-ribosyl)imidazole-4-carboxamide from 5-amino-1-(5-phospho-D-ribosyl)imidazole-4-carboxylate: step 1/2. The chain is Phosphoribosylaminoimidazole-succinocarboxamide synthase from Staphylococcus aureus (strain MRSA252).